We begin with the raw amino-acid sequence, 320 residues long: Methionyl-tRNA formyltransferase (320 aa).

Position 114–117 (114–117) interacts with (6S)-5,6,7,8-tetrahydrofolate; that stretch reads SLLP.

Belongs to the Fmt family.

It carries out the reaction L-methionyl-tRNA(fMet) + (6R)-10-formyltetrahydrofolate = N-formyl-L-methionyl-tRNA(fMet) + (6S)-5,6,7,8-tetrahydrofolate + H(+). In terms of biological role, attaches a formyl group to the free amino group of methionyl-tRNA(fMet). The formyl group appears to play a dual role in the initiator identity of N-formylmethionyl-tRNA by promoting its recognition by IF2 and preventing the misappropriation of this tRNA by the elongation apparatus. The protein is Methionyl-tRNA formyltransferase of Acinetobacter baumannii (strain SDF).